A 669-amino-acid chain; its full sequence is Dymeclin (669 aa).

The N-myristoyl glycine moiety is linked to residue Gly2.

This sequence belongs to the dymeclin family. In terms of processing, myristoylated in vitro; myristoylation is not essential for protein targeting to Golgi compartment.

Its subcellular location is the cytoplasm. It is found in the golgi apparatus. Its function is as follows. Necessary for correct organization of Golgi apparatus. The chain is Dymeclin (DYM) from Gallus gallus (Chicken).